The primary structure comprises 415 residues: Serine/threonine transporter SstT (415 aa).

8 consecutive transmembrane segments (helical) span residues 23–43, 47–67, 85–105, 144–164, 181–201, 220–240, 293–313, and 333–353; these read ILIG…AAIA, LGTL…LMLV, ILFL…LFSF, ALLN…GFAL, AVTF…FGLV, LLVL…LLVF, IPLG…VLTL, and VVAS…LLLI.

It belongs to the dicarboxylate/amino acid:cation symporter (DAACS) (TC 2.A.23) family.

It localises to the cell inner membrane. It carries out the reaction L-serine(in) + Na(+)(in) = L-serine(out) + Na(+)(out). The catalysed reaction is L-threonine(in) + Na(+)(in) = L-threonine(out) + Na(+)(out). In terms of biological role, involved in the import of serine and threonine into the cell, with the concomitant import of sodium (symport system). This Klebsiella pneumoniae subsp. pneumoniae (strain ATCC 700721 / MGH 78578) protein is Serine/threonine transporter SstT.